The following is a 354-amino-acid chain: Uroporphyrinogen decarboxylase (354 aa).

Residues 27–31 (RQAGR), Asp77, Tyr154, Thr209, and His327 each bind substrate.

It belongs to the uroporphyrinogen decarboxylase family. In terms of assembly, homodimer.

The protein localises to the cytoplasm. It catalyses the reaction uroporphyrinogen III + 4 H(+) = coproporphyrinogen III + 4 CO2. The protein operates within porphyrin-containing compound metabolism; protoporphyrin-IX biosynthesis; coproporphyrinogen-III from 5-aminolevulinate: step 4/4. In terms of biological role, catalyzes the decarboxylation of four acetate groups of uroporphyrinogen-III to yield coproporphyrinogen-III. This chain is Uroporphyrinogen decarboxylase, found in Salmonella arizonae (strain ATCC BAA-731 / CDC346-86 / RSK2980).